The following is a 658-amino-acid chain: Biosynthetic arginine decarboxylase (658 aa).

Lysine 127 bears the N6-(pyridoxal phosphate)lysine mark. Substrate is bound at residue phenylalanine 307–tyrosine 317.

The protein belongs to the Orn/Lys/Arg decarboxylase class-II family. SpeA subfamily. The cofactor is Mg(2+). Requires pyridoxal 5'-phosphate as cofactor.

The catalysed reaction is L-arginine + H(+) = agmatine + CO2. The protein operates within amine and polyamine biosynthesis; agmatine biosynthesis; agmatine from L-arginine: step 1/1. In terms of biological role, catalyzes the biosynthesis of agmatine from arginine. This is Biosynthetic arginine decarboxylase from Salmonella typhi.